Reading from the N-terminus, the 365-residue chain is Mitogen-activated protein kinase HOG1A (365 aa).

The Protein kinase domain maps to tyrosine 24–leucine 303. ATP contacts are provided by residues valine 30–leucine 38 and lysine 53. Residue aspartate 145 is the Proton acceptor of the active site. Threonine 175 bears the Phosphothreonine mark. The TXY motif lies at threonine 175–tyrosine 177. Tyrosine 177 carries the post-translational modification Phosphotyrosine.

It belongs to the protein kinase superfamily. Ser/Thr protein kinase family. MAP kinase subfamily. HOG1 sub-subfamily. The cofactor is Mg(2+). Post-translationally, phosphorylated. Dually phosphorylated on Thr-175 and Tyr-177, which activates the enzyme. Rapidly dephosphorylated upon either hypo- or hyperosmotic shock.

The protein localises to the cytoplasm. Its subcellular location is the nucleus. The enzyme catalyses L-seryl-[protein] + ATP = O-phospho-L-seryl-[protein] + ADP + H(+). It catalyses the reaction L-threonyl-[protein] + ATP = O-phospho-L-threonyl-[protein] + ADP + H(+). Activated by tyrosine and threonine phosphorylation. Proline-directed serine/threonine-protein kinase involved in a signal transduction pathway that is activated by changes in the osmolarity of the extracellular environment. Controls osmotic regulation of transcription of target genes. This is Mitogen-activated protein kinase HOG1A (HOG1A) from Wallemia ichthyophaga (strain EXF-994 / CBS 113033).